Consider the following 684-residue polypeptide: Cleavage and polyadenylation specificity factor subunit 3 (684 aa).

Position 2 is an N-acetylserine (Ser2). The Zn(2+) site is built by His71, His73, Asp75, His76, His158, and Asp179. His396 functions as the Proton donor in the catalytic mechanism. His418 is a binding site for Zn(2+). Residues Lys462, Lys465, and Lys545 each participate in a glycyl lysine isopeptide (Lys-Gly) (interchain with G-Cter in SUMO) cross-link. Ser659 bears the Phosphoserine mark. A Phosphothreonine modification is found at Thr681.

This sequence belongs to the metallo-beta-lactamase superfamily. RNA-metabolizing metallo-beta-lactamase-like family. CPSF3 subfamily. In terms of assembly, component of the cleavage and polyadenylation specificity factor (CPSF) complex, composed of CPSF1, CPSF2, CPSF3, CPSF4 and FIP1L1. Interacts with CPSF2, CSTF2 and SYMPK. Interacts with TUT1; the interaction is direct and mediates the recruitment of the CPSF complex on the 3'UTR of pre-mRNAs. Interacts with WDR33. Interacts with ZC3H3. Interacts with ISY1; this interaction is in an RNA independent manner. Interacts with the microprocessor complex subunits DGCR8 and DROSHA; this interaction is in an RNA dependent manner. It depends on Zn(2+) as a cofactor. In terms of processing, sumoylated on Lys-462, Lys-465 and Lys-545, preferentially by SUMO3.

The protein localises to the nucleus. In terms of biological role, component of the cleavage and polyadenylation specificity factor (CPSF) complex that plays a key role in pre-mRNA 3'-end formation, recognizing the AAUAAA signal sequence and interacting with poly(A) polymerase and other factors to bring about cleavage and poly(A) addition. Has endonuclease activity, and functions as an mRNA 3'-end-processing endonuclease. Also involved in the histone 3'-end pre-mRNA processing. U7 snRNP-dependent protein that induces both the 3' endoribonucleolytic cleavage of histone pre-mRNAs and acts as a 5' to 3' exonuclease for degrading the subsequent downstream cleavage product (DCP) of mature histone mRNAs. Cleavage occurs after the 5'-ACCCA-3' sequence in the histone pre-mRNA leaving a 3'hydroxyl group on the upstream fragment containing the stem loop (SL) and 5' phosphate on the downstream cleavage product (DCP) starting with CU nucleotides. The U7-dependent 5' to 3' exonuclease activity is processive and degrades the DCP RNA substrate even after complete removal of the U7-binding site. Binds to the downstream cleavage product (DCP) of histone pre-mRNAs and the cleaved DCP RNA substrate in a U7 snRNP dependent manner. Required for the selective processing of microRNAs (miRNAs) during embryonic stem cell differentiation via its interaction with ISY1. Required for entering/progressing through S-phase of the cell cycle. Required for the biogenesis of all miRNAs from the pri-miR-17-92 primary transcript except miR-92a. Only required for the biogenesis of miR-290 and miR-96 from the pri-miR-290-295 and pri-miR-96-183 primary transcripts, respectively. This is Cleavage and polyadenylation specificity factor subunit 3 (Cpsf3) from Mus musculus (Mouse).